The sequence spans 155 residues: Ribosomal RNA large subunit methyltransferase H (155 aa).

S-adenosyl-L-methionine contacts are provided by residues L72, G103, and 122–127 (FGRMVW).

Belongs to the RNA methyltransferase RlmH family. In terms of assembly, homodimer.

The protein resides in the cytoplasm. The catalysed reaction is pseudouridine(1915) in 23S rRNA + S-adenosyl-L-methionine = N(3)-methylpseudouridine(1915) in 23S rRNA + S-adenosyl-L-homocysteine + H(+). Its function is as follows. Specifically methylates the pseudouridine at position 1915 (m3Psi1915) in 23S rRNA. This chain is Ribosomal RNA large subunit methyltransferase H, found in Paracoccus denitrificans (strain Pd 1222).